Here is a 185-residue protein sequence, read N- to C-terminus: Ribosome-recycling factor (185 aa).

It belongs to the RRF family.

The protein resides in the cytoplasm. In terms of biological role, responsible for the release of ribosomes from messenger RNA at the termination of protein biosynthesis. May increase the efficiency of translation by recycling ribosomes from one round of translation to another. The protein is Ribosome-recycling factor of Shouchella clausii (strain KSM-K16) (Alkalihalobacillus clausii).